The primary structure comprises 380 residues: Transaldolase (380 aa).

Catalysis depends on Lys-141, which acts as the Schiff-base intermediate with substrate.

The protein belongs to the transaldolase family. Type 2 subfamily.

It is found in the cytoplasm. It carries out the reaction D-sedoheptulose 7-phosphate + D-glyceraldehyde 3-phosphate = D-erythrose 4-phosphate + beta-D-fructose 6-phosphate. It functions in the pathway carbohydrate degradation; pentose phosphate pathway; D-glyceraldehyde 3-phosphate and beta-D-fructose 6-phosphate from D-ribose 5-phosphate and D-xylulose 5-phosphate (non-oxidative stage): step 2/3. Transaldolase is important for the balance of metabolites in the pentose-phosphate pathway. This Trichodesmium erythraeum (strain IMS101) protein is Transaldolase.